We begin with the raw amino-acid sequence, 383 residues long: Phosphoenolpyruvate/phosphate translocator 2, chloroplastic (383 aa).

Residues 1 to 55 (MFALTFLNPNPRLPSPLFLAKSTPESALSRRSRAFSSSNSYPWRPNLRFNGFKLK) constitute a chloroplast transit peptide. Helical transmembrane passes span 76-96 (GLKL…YNIF), 108-128 (ATVT…MWLL), 143-163 (VIVQ…VSLG), 179-199 (FFTV…WIVC), 210-232 (LASF…SNVT), 253-273 (INLF…LAIL), 299-319 (IMSL…YMIL), and 350-369 (VSPL…YLYS). Residues 93 to 212 (YNIFNKQVLR…PIVAGVSLAS (120 aa)) enclose the EamA domain.

The protein belongs to the TPT transporter family. PPT (TC 2.A.7.9) subfamily. In terms of tissue distribution, widely expressed in leaves throughout development. In flowers, expressed in sepals and pistils.

It localises to the plastid. The protein resides in the chloroplast membrane. Phosphoenolpyruvate/phosphate translocator that transports phosphoenolpyruvate (PEP), 2-phosphoglycerate and 3-phosphoglycerate. The sequence is that of Phosphoenolpyruvate/phosphate translocator 2, chloroplastic (PPT2) from Arabidopsis thaliana (Mouse-ear cress).